The primary structure comprises 986 residues: Probable serine/threonine-protein kinase DDB_G0272092 (986 aa).

In terms of domain architecture, C2 spans 1-107 (MARKIGSVRI…EYIVDTTKWY (107 aa)). Residues aspartate 22, aspartate 28, aspartate 76, aspartate 78, serine 81, and aspartate 84 each coordinate Ca(2+). ANK repeat units follow at residues 137–167 (PEKSPFIKAIKDNDTQAIELMMNKAKLDYTI), 171–201 (EGTPAIHIAAASNNIPLITMLLKGSDARVSI), 205–238 (HGNTPLHLFVQKNVSLNCEDIINKLIERGCGIND), 242–274 (LGETALHKACLATVVQKTTIVEQLLQKGAIINH), 278–307 (TRDTPLHYAIKVGKVEFVRFFLQNGANVMI), and 312–344 (PSRTPLELAKELGNPQIISKVEKVIEISDWLNE). The SAM domain maps to 333–396 (EKVIEISDWL…LRAVRKIKDP (64 aa)). Residues 412–438 (HVENDNNNNNNNNNNNNNSQEQCNINN) are compositionally biased toward low complexity. Disordered regions lie at residues 412–520 (HVEN…SNTT) and 532–574 (TTLT…PEGP). Residues 439-448 (DSLGSGNRNS) show a composition bias toward polar residues. Positions 454-464 (QNQNNTLNNNN) are enriched in low complexity. A compositionally biased stretch (polar residues) spans 465 to 476 (VESKSTGNLNSL). Low complexity-rich tracts occupy residues 493 to 520 (NILSPNPIPASSSAPAAPSPVAIGSNTT) and 546 to 571 (TESTTPPQQQQQTTTITPTKTTTVTP). A Protein kinase domain is found at 601–870 (LTYNVLLGTG…ELLKIRDEYN (270 aa)). ATP contacts are provided by residues 607-615 (LGTGASGKV) and lysine 628. The active-site Proton acceptor is the aspartate 722. Composition is skewed to low complexity over residues 901–913 (DSNNINNNNNNNN) and 928–947 (SNSNLLNNNNNNNNNDSDNN). The disordered stretch occupies residues 901-986 (DSNNINNNNN…SPMEPKSIKK (86 aa)). Polar residues-rich tracts occupy residues 948-959 (ISEPATTDSITK) and 969-978 (LTRTRSSSSP).

It belongs to the protein kinase superfamily. TKL Ser/Thr protein kinase family. Ca(2+) is required as a cofactor.

It carries out the reaction L-seryl-[protein] + ATP = O-phospho-L-seryl-[protein] + ADP + H(+). It catalyses the reaction L-threonyl-[protein] + ATP = O-phospho-L-threonyl-[protein] + ADP + H(+). The polypeptide is Probable serine/threonine-protein kinase DDB_G0272092 (Dictyostelium discoideum (Social amoeba)).